Consider the following 480-residue polypeptide: Krueppel-like factor 10 (480 aa).

Positions 1-12 (MLNFGASLQQAS) are enriched in polar residues. Disordered regions lie at residues 1 to 32 (MLNF…PWDK), 64 to 83 (VTPV…TPDL), and 97 to 146 (PSDF…APPL). A compositionally biased stretch (basic and acidic residues) spans 14 to 32 (GKMELISEKSKEGAHPWDK). At S183 the chain carries Phosphoserine. A disordered region spans residues 202–222 (AAVSPNRPKPEPSTAANGAEK). The residue at position 249 (S249) is a Phosphoserine. C2H2-type zinc fingers lie at residues 369-393 (HICS…VRTH), 399-423 (FSCS…RRTH), and 429-451 (FACP…ARRH).

This sequence belongs to the Sp1 C2H2-type zinc-finger protein family. Ubiquitinated; mediated by SIAH1 and leading to its subsequent proteasomal degradation.

It localises to the nucleus. In terms of biological role, transcriptional repressor which binds to the consensus sequence 5'-GGTGTG-3'. Regulates the circadian expression of genes involved in lipogenesis, gluconeogenesis, and glycolysis in the liver. Represses the expression of PCK2, a rate-limiting step enzyme of gluconeogenesis. May play a role in the cell cycle regulation. Plays a role in the regulation of the circadian clock; binds to the GC box sequence in the promoter of the core clock component ARTNL/BMAL1 and represses its transcriptional activity. This is Krueppel-like factor 10 (Klf10) from Rattus norvegicus (Rat).